Consider the following 720-residue polypeptide: MKDDFNDEEEVQSFGYKRFGIQEGNECTKCKNDWALRVAIALLYVLCALLTIAVAVLGYKVVQRMDNVTEGMQNYGGKITAVETDLKKLDDQTGEKSENATSELHSFKLEFQTLQKQLSDVIVKTSNNRAVLKELQLAGEDMQSGHLSLRDLLESNANVISKVNHTLNTYNSLIDGLKTETARLQSDLHVQTSEQGQNSHSISTLNFTQTQQRNLISSLQRSVEDTGQAVQKLKNDYQSLQQVARQTKADADWLREKVQNLQALAANNSLLTRSNSDSLEDVTSQLTTLSEQVQNTSTITDSHDQSLRELMDQQRDHDNATSIRFDALEARLDSNEGEMDRITGNVSFTTQLLRAISTDLNGLRTCSETVTRHSELLHGLNNSVAETRAESTELKAQQEELAVRLDKEVSSLSIVMDEMKLVDNKHSQLITNFTILQGPPGPRGPRGDKGSMGLPGKTGPKGEKGEKGAPGDAGPKGEKGPAGPPGVPGLKGPPGSRGSPGPKGSRGSGGRQGPSGEKGDPGIPGMPGRDGQPGPTGPQGPQGLRGPAGPAGLEGARGPVGPIGPPGPPGLPGLPAPPIVVPPVDPQGFVNRQVAPPPTTTPGCPPQWKGFREQCYHFSAPMESLNFDEAKERCSNLSSSMLIINDEEEQLWIKRQISGKGYFWLGLKWKPGQPDNWSHGHEAGEDCAGLIHEASWNDFFCTERIGFICERTNESKVPVL.

Residues 1-37 are Cytoplasmic-facing; sequence MKDDFNDEEEVQSFGYKRFGIQEGNECTKCKNDWALR. A helical; Signal-anchor for type II membrane protein transmembrane segment spans residues 38–58; it reads VAIALLYVLCALLTIAVAVLG. Residues 59 to 720 are Extracellular-facing; it reads YKVVQRMDNV…RTNESKVPVL (662 aa). 3 coiled-coil regions span residues 95–120, 216–267, and 377–408; these read EKSE…QLSD, ISSL…LAAN, and LHGL…LDKE. The tract at residues 433 to 576 is disordered; the sequence is FTILQGPPGP…GPPGLPGLPA (144 aa). Collagen-like domains are found at residues 444–503 and 510–569; these read GPRG…PGPK and GRQG…PGPP. Residues 460-479 show a composition bias toward basic and acidic residues; sequence PKGEKGEKGAPGDAGPKGEK. Low complexity predominate over residues 488-503; sequence PGLKGPPGSRGSPGPK. Over residues 504–513 the composition is skewed to gly residues; sequence GSRGSGGRQG. The span at 527-560 shows a compositional bias: low complexity; that stretch reads PGRDGQPGPTGPQGPQGLRGPAGPAGLEGARGPV. Positions 562–576 are enriched in pro residues; sequence PIGPPGPPGLPGLPA. 3 disulfides stabilise this stretch: Cys604–Cys615, Cys634–Cys709, and Cys687–Cys701. In terms of domain architecture, C-type lectin spans 611–710; sequence FREQCYHFSA…CTERIGFICE (100 aa). Positions 643, 645, and 649 each coordinate Ca(2+). 3 residues coordinate a carbohydrate: Lys670, Gln673, and Asp675. The Ca(2+) site is built by Gln673, Asp675, Asn676, Glu685, Asp686, Asn697, Asp698, and Glu710. Residue Glu685 participates in a carbohydrate binding. The a carbohydrate site is built by Asn697 and Asp698.

Its subcellular location is the membrane. Scavenger receptor that displays several functions associated with host defense. Binds to carbohydrates. The chain is Collectin-12 (colec12) from Danio rerio (Zebrafish).